The following is a 141-amino-acid chain: Large ribosomal subunit protein uL16 (141 aa).

Residues 1-23 form a disordered region; sequence MLMPKRTKYRKQMKGRNRGKAHR.

The protein belongs to the universal ribosomal protein uL16 family. Part of the 50S ribosomal subunit.

In terms of biological role, binds 23S rRNA and is also seen to make contacts with the A and possibly P site tRNAs. The chain is Large ribosomal subunit protein uL16 from Helicobacter pylori (strain P12).